Consider the following 1234-residue polypeptide: Coiled-coil domain-containing protein CG32809 (1234 aa).

The segment covering 1–11 (MLIRWKSKDKS) has biased composition (basic and acidic residues). Disordered regions lie at residues 1-88 (MLIR…HAHQ), 107-129 (KNKK…FDDD), and 330-350 (KVSM…NYEE). Residues 12–25 (ASSNQSVGGSSSSS) show a composition bias toward low complexity. Positions 55 to 69 (GDERRRAMRRDDPRR) are enriched in basic and acidic residues. Positions 412-436 (HRIRVEHMERQLANLTGLVQKALVN) form a coiled coil. A disordered region spans residues 498 to 548 (DIQGIPKSHNPLHAAETKPTKPAIKSSTLPRTSSQERDRLKPPPPPKPIVL). Coiled-coil stretches lie at residues 565–594 (EVYN…SQAQ) and 630–666 (TRIS…EVIN). 4 disordered regions span residues 754 to 793 (EQRL…ALSG), 815 to 852 (IAQQ…DESA), 928 to 1011 (LHSY…PPNQ), and 1028 to 1070 (SANA…ESGN). Composition is skewed to low complexity over residues 817 to 837 (QQQQ…QHQQ), 952 to 965 (TSSS…GSSS), 993 to 1004 (TSSRSPLASPTS), 1028 to 1039 (SANANANANSNA), and 1046 to 1068 (VGET…GNES). Residues 1077 to 1105 (VALEMRHQELLKKQKMLQEQYQRLQQMSK) are a coiled coil.

This chain is Coiled-coil domain-containing protein CG32809, found in Drosophila melanogaster (Fruit fly).